The primary structure comprises 426 residues: Glutamate-1-semialdehyde 2,1-aminomutase (426 aa).

Lys-265 carries the post-translational modification N6-(pyridoxal phosphate)lysine.

The protein belongs to the class-III pyridoxal-phosphate-dependent aminotransferase family. HemL subfamily. In terms of assembly, homodimer. It depends on pyridoxal 5'-phosphate as a cofactor.

The protein localises to the cytoplasm. The catalysed reaction is (S)-4-amino-5-oxopentanoate = 5-aminolevulinate. The protein operates within porphyrin-containing compound metabolism; protoporphyrin-IX biosynthesis; 5-aminolevulinate from L-glutamyl-tRNA(Glu): step 2/2. The chain is Glutamate-1-semialdehyde 2,1-aminomutase from Escherichia coli O139:H28 (strain E24377A / ETEC).